Consider the following 613-residue polypeptide: Chaperone protein DnaK (613 aa).

Residues Met-579–Ser-613 are disordered. A compositionally biased stretch (low complexity) spans Gln-581–Ser-597. Over residues Gln-599–Ser-613 the composition is skewed to basic and acidic residues.

This sequence belongs to the heat shock protein 70 family.

Acts as a chaperone. This Thermoplasma volcanium (strain ATCC 51530 / DSM 4299 / JCM 9571 / NBRC 15438 / GSS1) protein is Chaperone protein DnaK.